Consider the following 400-residue polypeptide: Nicotinate phosphoribosyltransferase (400 aa).

H220 bears the Phosphohistidine; by autocatalysis mark.

This sequence belongs to the NAPRTase family. Transiently phosphorylated on a His residue during the reaction cycle. Phosphorylation strongly increases the affinity for substrates and increases the rate of nicotinate D-ribonucleotide production. Dephosphorylation regenerates the low-affinity form of the enzyme, leading to product release.

It carries out the reaction nicotinate + 5-phospho-alpha-D-ribose 1-diphosphate + ATP + H2O = nicotinate beta-D-ribonucleotide + ADP + phosphate + diphosphate. It participates in cofactor biosynthesis; NAD(+) biosynthesis; nicotinate D-ribonucleotide from nicotinate: step 1/1. In terms of biological role, catalyzes the synthesis of beta-nicotinate D-ribonucleotide from nicotinate and 5-phospho-D-ribose 1-phosphate at the expense of ATP. The chain is Nicotinate phosphoribosyltransferase from Shigella dysenteriae serotype 1 (strain Sd197).